The following is a 534-amino-acid chain: MEEEMQPAEEGPSVPKIYKQRSPYSVLKTFPSKRPALAKRYERPTLVELPHVRAPPPPPPPFAPHAAVSISSSEPPPQQFQAQSSYPPGPGRAAAAASSSSPSCTPATSQGHLRTPAQPPPASPAASSSSSFAAVVRYGPGAAAAAGTGGTGSDSASLELSAESRMILDAFAQQCSRVLSLLNCGGKLLDSNHSQSMISCVKQEGSSYNERQEHCHIGKGVHSQTSDNVDIEMQYMQRKQQTSAFLRVFTDSLQNYLLSGSFPTPNPSSASEYGHLADVDPLSTSPVHTLGGWTSPATSESHGHPSSSTLPEEEEEEDEEGYCPRCQELEQEVISLQQENEELRRKLESIPVPCQTVLDYLKMVLQHHNQLLIPQPADQPTEGSKQLLNNYPVYITSKQWDEAVNSSKKDGRRLLRYLIRFVFTTDELKYSCGLGKRKRSVQSGETGPERRPLDPVKVTCLREFIRMHCTSNPDWWMPSEEQINKVFSDAVGHARQGRAVGTFLHNGGSFYEGIDHQASQDEVFNKSSQDGSGD.

Disordered stretches follow at residues 1-24 (MEEE…RSPY), 48-128 (ELPH…AASS), and 287-322 (VHTL…EEGY). Positions 53-63 (RAPPPPPPPFA) are enriched in pro residues. The segment covering 69–83 (SISSSEPPPQQFQAQ) has biased composition (polar residues). Positions 91–109 (GRAAAAASSSSPSCTPATS) are enriched in low complexity. Polar residues predominate over residues 295–310 (SPATSESHGHPSSSTL). The segment covering 311-321 (PEEEEEEDEEG) has biased composition (acidic residues). A coiled-coil region spans residues 324 to 351 (PRCQELEQEVISLQQENEELRRKLESIP). The BEN domain maps to 390 to 498 (NYPVYITSKQ…DAVGHARQGR (109 aa)).

The polypeptide is BEN domain-containing protein 4 (BEND4) (Homo sapiens (Human)).